A 215-amino-acid chain; its full sequence is Ribonuclease HII (215 aa).

The RNase H type-2 domain maps to 19–213 (QTVAGVDEVG…SLRQPSQQID (195 aa)). Residues Asp-25, Glu-26, and Asp-121 each contribute to the a divalent metal cation site.

This sequence belongs to the RNase HII family. Mn(2+) serves as cofactor. It depends on Mg(2+) as a cofactor.

The protein localises to the cytoplasm. It carries out the reaction Endonucleolytic cleavage to 5'-phosphomonoester.. Functionally, endonuclease that specifically degrades the RNA of RNA-DNA hybrids. This Synechococcus elongatus (strain ATCC 33912 / PCC 7942 / FACHB-805) (Anacystis nidulans R2) protein is Ribonuclease HII.